The chain runs to 244 residues: L-xylulose reductase (244 aa).

Met-1 carries the N-acetylmethionine modification. 11–39 contributes to the NADP(+) binding site; sequence LVTGAGKGIGRSTVLALQAAGAHVVAVSR. Arg-21 is subject to Omega-N-methylarginine. Position 46 is a phosphoserine (Ser-46). Ser-136 provides a ligand contact to substrate. Tyr-149 acts as the Proton acceptor in catalysis. The active site involves Lys-153.

This sequence belongs to the short-chain dehydrogenases/reductases (SDR) family. As to quaternary structure, homotetramer. Highly expressed in kidney and liver. Expressed in epididymis. Weakly expressed in brain, heart, lung, spleen and testis.

It is found in the membrane. It localises to the cytoplasmic vesicle. The protein resides in the secretory vesicle. Its subcellular location is the acrosome. It catalyses the reaction xylitol + NADP(+) = L-xylulose + NADPH + H(+). Its function is as follows. Catalyzes the NADPH-dependent reduction of several pentoses, tetroses, trioses, alpha-dicarbonyl compounds and L-xylulose. Participates in the uronate cycle of glucose metabolism. May play a role in the water absorption and cellular osmoregulation in the proximal renal tubules by producing xylitol, an osmolyte, thereby preventing osmolytic stress from occurring in the renal tubules. This Mesocricetus auratus (Golden hamster) protein is L-xylulose reductase (DCXR).